Here is a 296-residue protein sequence, read N- to C-terminus: MDRKATVIDGKLAAQHVKDSLRTRVAALEAIGQRPGLGTILVGDDAGSQSYVAGKHRDCAEVGIDSFRIDMSAEASQERVLDAVGRLNEDERCSGFIVQLPLPAHIDMHLVLNAIDPEKDADGLHPVNLGRLVLNQEGTLPCTPRGILELLRGNDVPITGSQFCVIGCGTTVGRPLGLMLTRPSEHATVTMVNEATIDVAAHTRVADVVIAAAGVANLVKPYWIKPGATVLSVGITRTVEGILGDVDPGVENVAGKWTRAAGGVGPMTRAMLLKNVVELAERAAGITSEASTKIAS.

NADP(+) contacts are provided by residues 167–169 (GCG) and Ile-235.

Belongs to the tetrahydrofolate dehydrogenase/cyclohydrolase family. Homodimer.

The enzyme catalyses (6R)-5,10-methylene-5,6,7,8-tetrahydrofolate + NADP(+) = (6R)-5,10-methenyltetrahydrofolate + NADPH. It catalyses the reaction (6R)-5,10-methenyltetrahydrofolate + H2O = (6R)-10-formyltetrahydrofolate + H(+). It functions in the pathway one-carbon metabolism; tetrahydrofolate interconversion. In terms of biological role, catalyzes the oxidation of 5,10-methylenetetrahydrofolate to 5,10-methenyltetrahydrofolate and then the hydrolysis of 5,10-methenyltetrahydrofolate to 10-formyltetrahydrofolate. The sequence is that of Bifunctional protein FolD 1 from Nocardioides sp. (strain ATCC BAA-499 / JS614).